We begin with the raw amino-acid sequence, 127 residues long: Ribonuclease VapC9 (127 aa).

One can recognise a PINc domain in the interval 2-115; that stretch reads IVVDASAALA…VTADLRLSDT (114 aa). Residues Asp5 and Asp91 each coordinate Mg(2+).

Belongs to the PINc/VapC protein family. Requires Mg(2+) as cofactor.

Functionally, toxic component of a type II toxin-antitoxin (TA) system. An RNase. The cognate antitoxin is VapB9. The sequence is that of Ribonuclease VapC9 from Mycobacterium tuberculosis (strain CDC 1551 / Oshkosh).